Here is a 393-residue protein sequence, read N- to C-terminus: Major outer membrane protein P.IA (393 aa).

The first 19 residues, 1-19, serve as a signal peptide directing secretion; it reads MRKKLTALVLSALPLAAVA.

It belongs to the Gram-negative porin family. Homotrimer.

It localises to the cell outer membrane. Serves as a slightly cation selective porin. Major antigen on the gonococcal cell surface and it may have pathogenic properties in addition to its porin activity. This Neisseria meningitidis serogroup C protein is Major outer membrane protein P.IA (porA).